Reading from the N-terminus, the 199-residue chain is uncharacterized protein (199 aa).

A run of 7 helical transmembrane segments spans residues 10–32 (LTSQAAVLTSLVVIGLILCFIGY), 37–59 (VYSAVIGLFIGQLVGIYITINYY), 63–80 (LIVILASAIVGALLFALI), 83–100 (LGLIVTGAAFGYFVGVYL), 104–121 (YQVYAFVLAALFALINLF), 126–148 (LTVLITSVIGASAIALAVHMGIT), and 163–185 (FDAIFSNAYFDLLWFTLVLTGII).

Its subcellular location is the cell membrane. This is an uncharacterized protein from Archaeoglobus fulgidus (strain ATCC 49558 / DSM 4304 / JCM 9628 / NBRC 100126 / VC-16).